The primary structure comprises 674 residues: Inactivation-no-after-potential D protein (674 aa).

Residues 17–106 (MVTLDKTGKK…KIELEIQTFD (90 aa)) enclose the PDZ 1 domain. A disordered region spans residues 133 to 192 (QTTNNNASGGQGMGQGQGQGQGMAGMNRQQSMQKRNTTFTASMRQKHSNYADEDDEDTRD). Over residues 141-155 (GGQGMGQGQGQGQGM) the composition is skewed to gly residues. Polar residues predominate over residues 159-175 (NRQQSMQKRNTTFTASM). 2 PDZ domains span residues 249–332 (RIEV…TSRR) and 364–448 (ARTV…LTLK). Residues 458–475 (AAEEKKKEEAKKEEEKPQ) are compositionally biased toward basic and acidic residues. A disordered region spans residues 458–481 (AAEEKKKEEAKKEEEKPQEPATAE). PDZ domains lie at 489-577 (LIEL…RADP) and 584-664 (NVDL…TRPK). Phosphoserine is present on residues Ser598 and Ser600.

In terms of assembly, interacts with the C-terminus of trp, and with norpA and inaC to form the inaD signaling complex. Interacts with Fkbp59, which together with trpl, rhodopsin and calmodulin may also be part of the inaD complex. In terms of processing, phosphorylated by inaC. As to expression, expressed in photoreceptor cells (R cells) of the compound eyes and ocelli.

It is found in the cell projection. Its subcellular location is the rhabdomere. Its function is as follows. Involved in the negative feedback regulation of the light-activated signaling cascade in photoreceptors through a calcium-mediated process. Interacts with tetrapeptide ligand located in C-terminal sequence of 3 key components of the visual cascade, tethering them and forming a macromolecular signaling phototransduction complex. This chain is Inactivation-no-after-potential D protein (inaD), found in Drosophila melanogaster (Fruit fly).